The primary structure comprises 183 residues: UPF0302 protein BH1670 (183 aa).

It belongs to the UPF0302 family.

The chain is UPF0302 protein BH1670 from Halalkalibacterium halodurans (strain ATCC BAA-125 / DSM 18197 / FERM 7344 / JCM 9153 / C-125) (Bacillus halodurans).